A 900-amino-acid polypeptide reads, in one-letter code: MQLHILNNPKDAALAADAEFLKQSLFNLLHEEASPLVVETVKLLSTSDDSAALIEKVLPQLDERQTYDLTLACGLFAQILNIAEDVHHERRRQIHEDAGHNAAEGSLTETVRRLKAGKADGKSVQRQLDNTSVTAVLTAHPTEVQRQTVLNFNRRIRALLPQRERCTNADALARLRREIDTVLLGLWQTSETRRHKLSVNDEINNGVSIFPMSFFEALPKLYRKMEHDFQTAYPDVRVPNILKIGGWIGGDRDGNPFVSGETLRFAFRRHADAVFRFYRSELDKLYRELPLSIRRVKVNDDVMALAALSPDEEIARTEEPYRRAIAYIMARAMGKARSLGLGMGCKFGFLEPYASAQKFLDDLKKLQRSLIDNGSRLLAEGRLADLIRSVSVFGFHMMPLDLRQHAGKHADVVAELFQHAGLEDYNSLNEEQKQAALLRELGHQRPLYSPFITYSDHTRRELAIFNEARKIKDEFGEDAVTQSIISNCEQPGDLLALALLLKESGLLAVENGKPHSRINIVPLFETIEALENACPVMETMFRLDWYDALLESRGNIQEIMLGYSDSNKDGGYVTSSWCLHQAELGLVELFKKYDVRMRLFHGRGGSVGRGGGPSYQAILAQPAGSVAGQIRITEQGEVITAKYADPGNAQRNLETLVAATLEASILPDKKDPDAKLMQALSDVSFKYYRELITHPDFIDYFLQTSPIQEIATLNLGSRPASRKTLARIQDLRAIPWVFSWMQNRLMLPAWYGFGSAVETLCEGSPETLAALRGHAQNNPFFQAMLSNMEQVMAKTDITLAENYAGLSESPEKAKVIFGMIKEEYRRSRKALLDLLQTEELLRDNRSLARSLALRIPYLNALNGLQVAMLKRLRKEPDNPHALLMVHLTINGVAQGLRNTG.

Residues His-140 and Lys-568 contribute to the active site.

This sequence belongs to the PEPCase type 1 family. Mg(2+) serves as cofactor.

It catalyses the reaction oxaloacetate + phosphate = phosphoenolpyruvate + hydrogencarbonate. Forms oxaloacetate, a four-carbon dicarboxylic acid source for the tricarboxylic acid cycle. The protein is Phosphoenolpyruvate carboxylase of Neisseria gonorrhoeae (strain ATCC 700825 / FA 1090).